Reading from the N-terminus, the 216-residue chain is DNA repair and recombination protein RadB (216 aa).

This sequence belongs to the eukaryotic RecA-like protein family. RadB subfamily.

Functionally, involved in DNA repair and in homologous recombination. May regulate the cleavage reactions of the branch-structured DNA. Has a very weak ATPase activity that is not stimulated by DNA. Binds DNA but does not promote DNA strands exchange. This Methanococcus maripaludis (strain C5 / ATCC BAA-1333) protein is DNA repair and recombination protein RadB.